The following is a 588-amino-acid chain: Putative calcium-binding mitochondrial carrier F55A11.4 (588 aa).

The span at 1–14 (MINKNEQTESTSGA) shows a compositional bias: polar residues. The segment at 1–25 (MINKNEQTESTSGAAEQKEDDEEQY) is disordered. EF-hand domains lie at 73 to 108 (EKERQIRDIYDRLDIDNDGTIDIRDLTLALKHETPH), 109 to 139 (IPANLAPVIMSKMSPDDEGRVDFYSFSSYVL), 140 to 175 (ENEQKLAEMFADMDRNHDGLVDVVEMKNYCKDIGVP), and 176 to 211 (LDDHKAQHIVNKMDQTGSASVDLKEFQEFMMLYPSS). Residues Asp-86, Asp-88, Asp-90, Thr-92, and Asp-97 each coordinate Ca(2+). 4 residues coordinate Ca(2+): Asp-153, Asn-155, Asp-157, and Glu-164. 3 Solcar repeats span residues 246 to 332 (GIWW…LKRL), 342 to 428 (ISTF…LKRT), and 440 to 529 (PGVL…VRTG). Transmembrane regions (helical) follow at residues 252–269 (LVAGGAAGAVSRTCTAPF), 307–326 (GNGINVIKIAPESAIKFMCY), 352–365 (SAAGAISQSTIYPM), 403–422 (GYLPNLIGIIPYAGIDLAIY), 446–463 (LACGTCSSTCGQLSSYPF), and 504–523 (GITPNFLKVIPAVSISYVVY).

This sequence belongs to the mitochondrial carrier (TC 2.A.29) family. As to quaternary structure, homodimer (via N-terminus).

It is found in the mitochondrion inner membrane. In terms of biological role, mitochondrial and calcium-binding carrier that catalyzes the calcium-dependent exchange of cytoplasmic glutamate with mitochondrial aspartate across the mitochondrial inner membrane. This Caenorhabditis elegans protein is Putative calcium-binding mitochondrial carrier F55A11.4.